The following is a 301-amino-acid chain: Porphobilinogen deaminase (301 aa).

An S-(dipyrrolylmethanemethyl)cysteine modification is found at Cys-242.

It belongs to the HMBS family. In terms of assembly, monomer. Dipyrromethane is required as a cofactor.

It carries out the reaction 4 porphobilinogen + H2O = hydroxymethylbilane + 4 NH4(+). It participates in porphyrin-containing compound metabolism; protoporphyrin-IX biosynthesis; coproporphyrinogen-III from 5-aminolevulinate: step 2/4. Its function is as follows. Tetrapolymerization of the monopyrrole PBG into the hydroxymethylbilane pre-uroporphyrinogen in several discrete steps. This Rickettsia akari (strain Hartford) protein is Porphobilinogen deaminase.